We begin with the raw amino-acid sequence, 2346 residues long: Myomegalin (2346 aa).

Coiled coils occupy residues arginine 41–alanine 132, aspartate 162–glutamate 205, aspartate 238–leucine 318, and cysteine 350–leucine 684. Phosphoserine is present on glutamate 252. The segment at asparagine 698–lysine 732 is disordered. Phosphothreonine is present on threonine 704. A compositionally biased stretch (basic and acidic residues) spans serine 722–lysine 732. Coiled-coil stretches lie at residues glycine 743–alanine 936, leucine 1002–serine 1043, serine 1096–valine 1124, serine 1212–threonine 1240, glycine 1346–threonine 1385, and glycine 1431–asparagine 1455. Residues aspartate 1193–glutamine 1214 are disordered. Positions serine 1205–glutamine 1214 are enriched in polar residues. Residues lysine 1551–serine 1642 enclose the Olduvai domain. A compositionally biased stretch (low complexity) spans serine 1591–leucine 1600. Disordered regions lie at residues serine 1591–serine 1614 and glutamate 1633–glutamine 1690. The span at alanine 1652–glutamine 1690 shows a compositional bias: polar residues. Coiled-coil stretches lie at residues valine 1736–valine 1760 and glycine 1840–glutamate 2077. Disordered stretches follow at residues glycine 2081–lysine 2103 and valine 2127–valine 2156. Residues leucine 2085–lysine 2103 show a composition bias toward polar residues. Positions glutamate 2273–glutamine 2312 form a coiled coil.

In terms of assembly, interacts with PDE4D. Isoform 13 interacts with MAPRE1 and MAPRE3. Isoform 13 forms a pericentrosomal complex with AKAP9, CDK5RAP2 and EB1/MAPRE1; within this complex, may mediate MAPRE1-binding to CDK5RAP2. Interaction of isoform 13 with AKAP9 stabilizes both proteins. Isoform 13 interacts (via N-terminus) with CAMSAP2; this interaction is much stronger in the presence of AKAP9. In complex with AKAP9, Isoform 13 recruits CAMSAP2 to the Golgi apparatus. Isoform 13 interacts with unglycosylated LGALS3BP; this interaction may connect the pericentrosomal complex to the gamma-tubulin ring complex (gamma-TuRC) to promote microtubule assembly and acetylation. As to expression, highly expressed in adult and fetal heart, in skeletal muscle and, to a lower extent, in brain and placenta.

The protein resides in the golgi apparatus. It is found in the cytoplasm. Its subcellular location is the cytoskeleton. The protein localises to the microtubule organizing center. It localises to the centrosome. In terms of biological role, functions as an anchor sequestering components of the cAMP-dependent pathway to Golgi and/or centrosomes. Participates in microtubule dynamics, promoting microtubule assembly. Depending upon the cell context, may act at the level of the Golgi apparatus or that of the centrosome. In complex with AKAP9, recruits CAMSAP2 to the Golgi apparatus and tethers non-centrosomal minus-end microtubules to the Golgi, an important step for polarized cell movement. In complex with AKAP9, EB1/MAPRE1 and CDK5RAP2, contributes to microtubules nucleation and extension from the centrosome to the cell periphery, a crucial process for directed cell migration, mitotic spindle orientation and cell-cycle progression. This Homo sapiens (Human) protein is Myomegalin (PDE4DIP).